The chain runs to 329 residues: Ribonucleoside-diphosphate reductase subunit beta (329 aa).

Fe cation contacts are provided by Asp-66, Glu-97, and His-101. Tyr-105 is a catalytic residue. The Fe cation site is built by Glu-164, Glu-198, and His-201.

It belongs to the ribonucleoside diphosphate reductase small chain family. As to quaternary structure, tetramer of two alpha and two beta subunits. Requires Fe cation as cofactor.

The enzyme catalyses a 2'-deoxyribonucleoside 5'-diphosphate + [thioredoxin]-disulfide + H2O = a ribonucleoside 5'-diphosphate + [thioredoxin]-dithiol. Its function is as follows. Provides the precursors necessary for DNA synthesis. Catalyzes the biosynthesis of deoxyribonucleotides from the corresponding ribonucleotides. The sequence is that of Ribonucleoside-diphosphate reductase subunit beta (bnrdF) from Bacillus pumilus (Bacillus mesentericus).